Reading from the N-terminus, the 167-residue chain is Putative NADH-quinone oxidoreductase subunit B 2 (167 aa).

Belongs to the complex I 20 kDa subunit family. As to quaternary structure, NDH-1 is composed of 14 different subunits. Subunits NuoB, C, D, E, F, and G constitute the peripheral sector of the complex.

The protein resides in the cell inner membrane. It catalyses the reaction a quinone + NADH + 5 H(+)(in) = a quinol + NAD(+) + 4 H(+)(out). In terms of biological role, NDH-1 shuttles electrons from NADH, via FMN and iron-sulfur (Fe-S) centers, to quinones in the respiratory chain. Couples the redox reaction to proton translocation (for every two electrons transferred, four hydrogen ions are translocated across the cytoplasmic membrane), and thus conserves the redox energy in a proton gradient. The protein is Putative NADH-quinone oxidoreductase subunit B 2 of Burkholderia pseudomallei (strain 1710b).